The primary structure comprises 67 residues: Pepsin B (67 aa).

A propeptide spans 1–43 (activation peptide); the sequence is MERIILRKGKSIREAMEEQGVLEKFLKNRPKIDPAAKYHFNND.

This sequence belongs to the peptidase A1 family.

The protein resides in the secreted. It catalyses the reaction Degradation of gelatin, little activity on hemoglobin. Specificity on B chain of insulin more restricted than that of pepsin A. Does not cleave 1-Phe-|-Val-2, 4-Gln-|-His-5 or 23-Gly-|-Phe-24.. The protein is Pepsin B (PGB) of Sus scrofa (Pig).